Reading from the N-terminus, the 334-residue chain is CRISPR-associated protein Cas1 3 (334 aa).

Mn(2+) is bound by residues Glu165, His230, and Glu245.

This sequence belongs to the CRISPR-associated endonuclease Cas1 family. Homodimer, forms a heterotetramer with a Cas2 homodimer. Mg(2+) serves as cofactor. Mn(2+) is required as a cofactor.

CRISPR (clustered regularly interspaced short palindromic repeat), is an adaptive immune system that provides protection against mobile genetic elements (viruses, transposable elements and conjugative plasmids). CRISPR clusters contain spacers, sequences complementary to antecedent mobile elements, and target invading nucleic acids. CRISPR clusters are transcribed and processed into CRISPR RNA (crRNA). Acts as a dsDNA endonuclease. Involved in the integration of spacer DNA into the CRISPR cassette. The protein is CRISPR-associated protein Cas1 3 of Methanobrevibacter ruminantium (strain ATCC 35063 / DSM 1093 / JCM 13430 / OCM 146 / M1) (Methanobacterium ruminantium).